Consider the following 937-residue polypeptide: Protein translocase subunit SecA (937 aa).

Residues Gln-90, 108–112, and Asp-509 contribute to the ATP site; that span reads GEGKT.

The protein belongs to the SecA family. In terms of assembly, monomer and homodimer. Part of the essential Sec protein translocation apparatus which comprises SecA, SecYEG and auxiliary proteins SecDF. Other proteins may also be involved.

The protein resides in the cell inner membrane. It is found in the cellular thylakoid membrane. It localises to the cytoplasm. It catalyses the reaction ATP + H2O + cellular proteinSide 1 = ADP + phosphate + cellular proteinSide 2.. Functionally, part of the Sec protein translocase complex. Interacts with the SecYEG preprotein conducting channel. Has a central role in coupling the hydrolysis of ATP to the transfer of proteins into and across the cell membrane, serving as an ATP-driven molecular motor driving the stepwise translocation of polypeptide chains across the membrane. Its function is as follows. Probably participates in protein translocation into and across both the cytoplasmic and thylakoid membranes in cyanobacterial cells. The chain is Protein translocase subunit SecA from Synechococcus sp. (strain CC9902).